A 124-amino-acid chain; its full sequence is Ubiquitin-related modifier 1 (124 aa).

Residues 34-53 (IPSLVPKDNTTSAKNPPPKD) are disordered. Gly-124 carries the post-translational modification 1-thioglycine. A Glycyl lysine isopeptide (Gly-Lys) (interchain with K-? in acceptor proteins) cross-link involves residue Gly-124.

This sequence belongs to the URM1 family. Post-translationally, C-terminal thiocarboxylation occurs in 2 steps, it is first acyl-adenylated (-COAMP) via the hesA/moeB/thiF part of UBA4, then thiocarboxylated (-COSH) via the rhodanese domain of UBA4.

The protein localises to the cytoplasm. The protein operates within tRNA modification; 5-methoxycarbonylmethyl-2-thiouridine-tRNA biosynthesis. Acts as a sulfur carrier required for 2-thiolation of mcm(5)S(2)U at tRNA wobble positions of cytosolic tRNA(Lys), tRNA(Glu) and tRNA(Gln). Serves as sulfur donor in tRNA 2-thiolation reaction by being thiocarboxylated (-COSH) at its C-terminus by the MOCS3 homolog UBA4. The sulfur is then transferred to tRNA to form 2-thiolation of mcm(5)S(2)U. Prior mcm(5) tRNA modification by the elongator complex is required for 2-thiolation. Also acts as a ubiquitin-like protein (UBL) that is covalently conjugated via an isopeptide bond to lysine residues of target proteins such as AHP1. The thiocarboxylated form serves as substrate for conjugation and oxidative stress specifically induces the formation of UBL-protein conjugates. This chain is Ubiquitin-related modifier 1, found in Coprinopsis cinerea (strain Okayama-7 / 130 / ATCC MYA-4618 / FGSC 9003) (Inky cap fungus).